Reading from the N-terminus, the 190-residue chain is RNA pyrophosphohydrolase (190 aa).

The Nudix hydrolase domain maps to 6–149 (GYRPNVGIVL…KRSVYARALC (144 aa)). The short motif at 38–59 (GGMHSDETPVEAMYRELNEETG) is the Nudix box element.

Belongs to the Nudix hydrolase family. RppH subfamily. It depends on a divalent metal cation as a cofactor.

Accelerates the degradation of transcripts by removing pyrophosphate from the 5'-end of triphosphorylated RNA, leading to a more labile monophosphorylated state that can stimulate subsequent ribonuclease cleavage. The chain is RNA pyrophosphohydrolase from Xylella fastidiosa (strain Temecula1 / ATCC 700964).